The primary structure comprises 1257 residues: Liprin-alpha-2 (1257 aa).

3 disordered regions span residues 1 to 29, 231 to 265, and 438 to 463; these read MMCEVMPTINEDTPMSQRGSQSSGSDSDS, ASSEGSTESEHLEGMEPGQKVHEKRLSNGSIDSTD, and EGQLEEKNQELQRARQREKMNEEHNK. Over residues 16-26 the composition is skewed to low complexity; that stretch reads SQRGSQSSGSD. Coiled coils occupy residues 29–154, 185–541, and 643–695; these read SHFE…SLRM, KALD…SLIE, and HSDA…GLNL. Phosphoserine is present on Ser236. Phosphothreonine is present on Thr237. Residues 238–256 show a composition bias toward basic and acidic residues; that stretch reads ESEHLEGMEPGQKVHEKRL. Ser239 is subject to Phosphoserine. Phosphoserine is present on residues Ser687 and Ser689. Composition is skewed to low complexity over residues 709–725 and 798–813; these read TASSLASSSPPSGHSTP and SSLSVSLEPESLGLGS. Disordered stretches follow at residues 709–738 and 790–834; these read TASSLASSSPPSGHSTPKLTPRSPAREMDR and SSYH…KSSI. A phosphoserine mark is found at Ser817 and Ser820. 3 SAM domains span residues 898 to 964, 1020 to 1084, and 1108 to 1177; these read WDGP…MVSL, NHEW…LKRL, and WSND…LLAL. Residues 1081 to 1107 are a coiled coil; the sequence is LKRLNYDRKELERRREASQHEIKDVLV.

Belongs to the liprin family. Liprin-alpha subfamily. Forms homodimers and heterodimers with liprins-alpha and liprins-beta. Interacts with the second PTPase domain of PTPRD, PTPRF and PTPRS. Interacts with KIF1A; the interaction decreases in presence of calcium. In terms of tissue distribution, expressed only in brain.

The protein localises to the cytoplasm. It localises to the cell surface. Its subcellular location is the cell projection. The protein resides in the dendritic spine. Its function is as follows. Alters PTPRF cellular localization and induces PTPRF clustering. May regulate the disassembly of focal adhesions. May localize receptor-like tyrosine phosphatases type 2A at specific sites on the plasma membrane, possibly regulating their interaction with the extracellular environment and their association with substrates. In neuronal cells, is a scaffolding protein in the dendritic spines which acts as immobile postsynaptic post able to recruit KIF1A-driven dense core vesicles to dendritic spines. The chain is Liprin-alpha-2 (PPFIA2) from Homo sapiens (Human).